The following is a 319-amino-acid chain: ATP-dependent 6-phosphofructokinase (319 aa).

Gly-11 serves as a coordination point for ATP. 21-25 (RAVVR) contacts ADP. ATP-binding positions include 72–73 (RC) and 102–105 (GDGS). Position 103 (Asp-103) interacts with Mg(2+). 125-127 (TID) contacts substrate. Asp-127 functions as the Proton acceptor in the catalytic mechanism. Residue Arg-154 coordinates ADP. Substrate is bound by residues Arg-162 and 169–171 (MGR). ADP-binding positions include 185 to 187 (GAE), Arg-211, and 213 to 215 (KKH). Residues Glu-222, Arg-243, and 249–252 (HMQR) each bind substrate.

This sequence belongs to the phosphofructokinase type A (PFKA) family. ATP-dependent PFK group I subfamily. Prokaryotic clade 'B1' sub-subfamily. Homotetramer. The cofactor is Mg(2+).

The protein localises to the cytoplasm. It catalyses the reaction beta-D-fructose 6-phosphate + ATP = beta-D-fructose 1,6-bisphosphate + ADP + H(+). It functions in the pathway carbohydrate degradation; glycolysis; D-glyceraldehyde 3-phosphate and glycerone phosphate from D-glucose: step 3/4. Its activity is regulated as follows. Allosterically activated by ADP and other diphosphonucleosides, and allosterically inhibited by phosphoenolpyruvate. In terms of biological role, catalyzes the phosphorylation of D-fructose 6-phosphate to fructose 1,6-bisphosphate by ATP, the first committing step of glycolysis. The sequence is that of ATP-dependent 6-phosphofructokinase from Macrococcus caseolyticus (strain JCSC5402) (Macrococcoides caseolyticum).